Consider the following 690-residue polypeptide: Exonuclease GOR (690 aa).

Disordered regions lie at residues 136–162 (TRVA…NRSG) and 567–690 (QPRH…SLHH). The segment covering 585-595 (APSTTAISPES) has biased composition (polar residues). The segment covering 605 to 614 (KETGAVDGRR) has biased composition (basic and acidic residues). Positions 612 to 626 (GRRGQKAKSNPNRPL) are GOR14-1 epitope. Positions 631 to 646 (NPCRGPSGLSPSLCPS) are enriched in low complexity. Over residues 661–682 (PPLPVPRVPAAPPRACPHPSAH) the composition is skewed to pro residues.

This sequence belongs to the REXO1/REXO3 family.

Its subcellular location is the cytoplasm. The protein resides in the nucleus. This is Exonuclease GOR (REXO1L1) from Pan troglodytes (Chimpanzee).